A 168-amino-acid polypeptide reads, in one-letter code: UPF0304 protein MJECS11 (168 aa).

Belongs to the UPF0304 family.

The protein is UPF0304 protein MJECS11 of Methanocaldococcus jannaschii (strain ATCC 43067 / DSM 2661 / JAL-1 / JCM 10045 / NBRC 100440) (Methanococcus jannaschii).